Reading from the N-terminus, the 525-residue chain is GMP synthase [glutamine-hydrolyzing] (525 aa).

A Glutamine amidotransferase type-1 domain is found at 9–207 (RILILDFGSQ…VRDICQCEAL (199 aa)). The Nucleophile role is filled by Cys86. Residues His181 and Glu183 contribute to the active site. The GMPS ATP-PPase domain maps to 208-400 (WTPAKIIDDA…LGLPYDMLYR (193 aa)). 235-241 (SGGVDSS) contacts ATP.

In terms of assembly, homodimer.

It catalyses the reaction XMP + L-glutamine + ATP + H2O = GMP + L-glutamate + AMP + diphosphate + 2 H(+). The protein operates within purine metabolism; GMP biosynthesis; GMP from XMP (L-Gln route): step 1/1. Functionally, catalyzes the synthesis of GMP from XMP. The protein is GMP synthase [glutamine-hydrolyzing] of Shigella flexneri.